The chain runs to 361 residues: 45 kDa calcium-binding protein (361 aa).

Residues 1-35 (MVWLVAMTPRQSSLCGLAAHGLWFLGLVLLMDATA) form the signal peptide. Residue Asn-39 is glycosylated (N-linked (GlcNAc...) asparagine). EF-hand domains follow at residues 97–132 (RSRRKLMVIFSKVDVNTDRRISAKEMQHWIMEKTAE) and 136–171 (EAVKENKLHFRAVDPDGDGHVSWDEYKVKFLASKGH). Position 98 is a phosphoserine (Ser-98). Ca(2+) is bound by residues Asp-110, Asn-112, Asp-114, Arg-116, Glu-121, Asp-149, Asp-151, Asp-153, His-155, and Glu-160. Thr-192 carries the phosphothreonine modification. 4 EF-hand domains span residues 196–231 (LGNLRDRWYQADNPPADLLLTEDEFLSFLHPEHSRG), 232–267 (MLKFMVKEIFRDLDQDGDKQLSLPEFISLPVGTVEN), 277–312 (WVKDRKKEFEELIDSNHDGIVTMEELENYMDPMNEY), and 313–348 (NALNEAKQMIAIADENQNHHLEPEEILKYSEFFTGS). Asp-212 contributes to the Ca(2+) binding site. Thr-216 is modified (phosphothreonine). Residues Glu-219, Asp-245, Asp-247, Asp-249, Gln-251, and Glu-256 each contribute to the Ca(2+) site. Thr-264 is subject to Phosphothreonine. Positions 290, 292, and 294 each coordinate Ca(2+). Thr-298 carries the post-translational modification Phosphothreonine. 6 residues coordinate Ca(2+): Glu-301, Asp-326, Asn-328, Asn-330, His-332, and Glu-337. The tract at residues 308–361 (PMNEYNALNEAKQMIAIADENQNHHLEPEEILKYSEFFTGSKLMDYARNVHEEF) is necessary for intracellular retention in Golgi apparatus lumen.

This sequence belongs to the CREC family. In terms of tissue distribution, ubiquitous.

The protein localises to the golgi apparatus lumen. Functionally, may regulate calcium-dependent activities in the endoplasmic reticulum lumen or post-ER compartment. This chain is 45 kDa calcium-binding protein (Sdf4), found in Mus musculus (Mouse).